Consider the following 228-residue polypeptide: 2,3-bisphosphoglycerate-dependent phosphoglycerate mutase (228 aa).

Substrate is bound by residues 8–15, 21–22, Arg-60, 87–90, Lys-98, 114–115, and 183–184; these read RHGQSEWN, TG, ERHY, RR, and GN. Residue His-9 is the Tele-phosphohistidine intermediate of the active site. Glu-87 acts as the Proton donor/acceptor in catalysis.

The protein belongs to the phosphoglycerate mutase family. BPG-dependent PGAM subfamily.

The enzyme catalyses (2R)-2-phosphoglycerate = (2R)-3-phosphoglycerate. It participates in carbohydrate degradation; glycolysis; pyruvate from D-glyceraldehyde 3-phosphate: step 3/5. In terms of biological role, catalyzes the interconversion of 2-phosphoglycerate and 3-phosphoglycerate. In Staphylococcus haemolyticus (strain JCSC1435), this protein is 2,3-bisphosphoglycerate-dependent phosphoglycerate mutase.